We begin with the raw amino-acid sequence, 96 residues long: UPF0235 protein Tola_0962 (96 aa).

The protein belongs to the UPF0235 family.

The polypeptide is UPF0235 protein Tola_0962 (Tolumonas auensis (strain DSM 9187 / NBRC 110442 / TA 4)).